The sequence spans 576 residues: Arginine--tRNA ligase (576 aa).

The short motif at proline 122–histidine 132 is the 'HIGH' region element.

The protein belongs to the class-I aminoacyl-tRNA synthetase family. As to quaternary structure, monomer.

Its subcellular location is the cytoplasm. The catalysed reaction is tRNA(Arg) + L-arginine + ATP = L-arginyl-tRNA(Arg) + AMP + diphosphate. This chain is Arginine--tRNA ligase, found in Yersinia pseudotuberculosis serotype I (strain IP32953).